Here is a 229-residue protein sequence, read N- to C-terminus: Ribonuclease 3 (229 aa).

The RNase III domain occupies 4–133; that stretch reads WEELQESVGF…FIGALYLDNG (130 aa). Glu-46 provides a ligand contact to Mg(2+). Residue Asp-50 is part of the active site. Asp-119 and Glu-122 together coordinate Mg(2+). Residue Glu-122 is part of the active site. The 70-residue stretch at 159–228 folds into the DRBM domain; the sequence is DYKTQLQEIV…AQFAINQLTH (70 aa).

This sequence belongs to the ribonuclease III family. In terms of assembly, homodimer. It depends on Mg(2+) as a cofactor.

It localises to the cytoplasm. It carries out the reaction Endonucleolytic cleavage to 5'-phosphomonoester.. In terms of biological role, digests double-stranded RNA. Involved in the processing of primary rRNA transcript to yield the immediate precursors to the large and small rRNAs (23S and 16S). Processes some mRNAs, and tRNAs when they are encoded in the rRNA operon. Processes pre-crRNA and tracrRNA of type II CRISPR loci if present in the organism. The sequence is that of Ribonuclease 3 from Listeria monocytogenes serotype 4b (strain CLIP80459).